The primary structure comprises 515 residues: uncharacterized protein (515 aa).

Belongs to the AllF family.

This is an uncharacterized protein from Escherichia coli (strain K12).